Here is a 202-residue protein sequence, read N- to C-terminus: FMN-dependent NADH:quinone oxidoreductase (202 aa).

Residues Ser-12 and 21–23 (SFS) contribute to the FMN site.

It belongs to the azoreductase type 1 family. Homodimer. FMN serves as cofactor.

The enzyme catalyses 2 a quinone + NADH + H(+) = 2 a 1,4-benzosemiquinone + NAD(+). It catalyses the reaction N,N-dimethyl-1,4-phenylenediamine + anthranilate + 2 NAD(+) = 2-(4-dimethylaminophenyl)diazenylbenzoate + 2 NADH + 2 H(+). Its function is as follows. Quinone reductase that provides resistance to thiol-specific stress caused by electrophilic quinones. Functionally, also exhibits azoreductase activity. Catalyzes the reductive cleavage of the azo bond in aromatic azo compounds to the corresponding amines. This Mycoplasma mobile (strain ATCC 43663 / 163K / NCTC 11711) (Mesomycoplasma mobile) protein is FMN-dependent NADH:quinone oxidoreductase.